The following is a 257-amino-acid chain: 1-(5-phosphoribosyl)-5-[(5-phosphoribosylamino)methylideneamino] imidazole-4-carboxamide isomerase (257 aa).

D8 acts as the Proton acceptor in catalysis. The active-site Proton donor is D129.

Belongs to the HisA/HisF family.

It localises to the cytoplasm. The enzyme catalyses 1-(5-phospho-beta-D-ribosyl)-5-[(5-phospho-beta-D-ribosylamino)methylideneamino]imidazole-4-carboxamide = 5-[(5-phospho-1-deoxy-D-ribulos-1-ylimino)methylamino]-1-(5-phospho-beta-D-ribosyl)imidazole-4-carboxamide. The protein operates within amino-acid biosynthesis; L-histidine biosynthesis; L-histidine from 5-phospho-alpha-D-ribose 1-diphosphate: step 4/9. The sequence is that of 1-(5-phosphoribosyl)-5-[(5-phosphoribosylamino)methylideneamino] imidazole-4-carboxamide isomerase from Cyanothece sp. (strain PCC 7425 / ATCC 29141).